Here is a 244-residue protein sequence, read N- to C-terminus: DNA repair protein RecO (244 aa).

This sequence belongs to the RecO family.

In terms of biological role, involved in DNA repair and RecF pathway recombination. This Koribacter versatilis (strain Ellin345) protein is DNA repair protein RecO.